The sequence spans 178 residues: Extracellular fatty acid-binding protein (178 aa).

Residues methionine 1–alanine 20 form the signal peptide. Alanine 21 carries the blocked amino end (Ala) modification. Threonine 43 lines the enterobactin pocket. 1-tetradecanoyl-sn-glycerol 3-phosphate contacts are provided by tyrosine 72 and lysine 104. A disulfide bridge connects residues cysteine 80 and cysteine 173. Residues lysine 104, arginine 123, and arginine 134 each coordinate enterobactin. Arginine 134–tyrosine 136 serves as a coordination point for 1-tetradecanoyl-sn-glycerol 3-phosphate.

The protein belongs to the calycin superfamily. Lipocalin family. As to quaternary structure, monomer. In terms of processing, does not seem to be glycosylated. In terms of tissue distribution, expressed in egg white (at protein level). Expressed in the magnum of the oviduct (at protein level). Preferentially synthesized in nonproliferating cells.

It is found in the secreted. Its function is as follows. Siderocalin-like lipocalin tightly binding a variety of bacterial ferric siderophores, also binds long-chain unsaturated fatty acids such as linoleic acid, oleic acid, arachidonic acid and, with a lower affinity, long chain saturated fatty acids such as steraic acid. May act as an antibacterial factor, through dual ligand specificity, both as a siderophore-sequestrating molecule and a lysophosphatidic acid (LPA) sensor. The protein is Extracellular fatty acid-binding protein (EXFABP) of Gallus gallus (Chicken).